Reading from the N-terminus, the 301-residue chain is UDP-3-O-acyl-N-acetylglucosamine deacetylase (301 aa).

Positions 81, 237, and 241 each coordinate Zn(2+). Residue His-264 is the Proton donor of the active site.

The protein belongs to the LpxC family. Zn(2+) serves as cofactor.

The catalysed reaction is a UDP-3-O-[(3R)-3-hydroxyacyl]-N-acetyl-alpha-D-glucosamine + H2O = a UDP-3-O-[(3R)-3-hydroxyacyl]-alpha-D-glucosamine + acetate. It functions in the pathway glycolipid biosynthesis; lipid IV(A) biosynthesis; lipid IV(A) from (3R)-3-hydroxytetradecanoyl-[acyl-carrier-protein] and UDP-N-acetyl-alpha-D-glucosamine: step 2/6. Its function is as follows. Catalyzes the hydrolysis of UDP-3-O-myristoyl-N-acetylglucosamine to form UDP-3-O-myristoylglucosamine and acetate, the committed step in lipid A biosynthesis. This chain is UDP-3-O-acyl-N-acetylglucosamine deacetylase, found in Leptospira borgpetersenii serovar Hardjo-bovis (strain JB197).